Reading from the N-terminus, the 413-residue chain is Phosphoglycerate kinase (413 aa).

Residues D19–N21, R34, H57–K60, R114, and R154 contribute to the substrate site. ATP-binding positions include E332 and G358–S361.

The protein belongs to the phosphoglycerate kinase family. As to quaternary structure, monomer.

It localises to the cytoplasm. It carries out the reaction (2R)-3-phosphoglycerate + ATP = (2R)-3-phospho-glyceroyl phosphate + ADP. It participates in carbohydrate degradation; glycolysis; pyruvate from D-glyceraldehyde 3-phosphate: step 2/5. The chain is Phosphoglycerate kinase from Thermococcus sibiricus (strain DSM 12597 / MM 739).